The chain runs to 267 residues: tRNA pseudouridine synthase A (267 aa).

Asp54 functions as the Nucleophile in the catalytic mechanism. Residue Tyr114 participates in substrate binding.

The protein belongs to the tRNA pseudouridine synthase TruA family. In terms of assembly, homodimer.

The enzyme catalyses uridine(38/39/40) in tRNA = pseudouridine(38/39/40) in tRNA. In terms of biological role, formation of pseudouridine at positions 38, 39 and 40 in the anticodon stem and loop of transfer RNAs. This chain is tRNA pseudouridine synthase A, found in Tropheryma whipplei (strain Twist) (Whipple's bacillus).